Reading from the N-terminus, the 310-residue chain is p-hydroxybenzoic acid efflux pump subunit AaeA (310 aa).

The helical transmembrane segment at 12-32 (AITVVLVILAFIAIFNAWVYY) threads the bilayer.

The protein belongs to the membrane fusion protein (MFP) (TC 8.A.1) family.

The protein resides in the cell inner membrane. Forms an efflux pump with AaeB. The polypeptide is p-hydroxybenzoic acid efflux pump subunit AaeA (Escherichia coli O17:K52:H18 (strain UMN026 / ExPEC)).